Reading from the N-terminus, the 422-residue chain is Choline monooxygenase, chloroplastic (422 aa).

A chloroplast-targeting transit peptide spans 1-47; that stretch reads MMTTLTATVPEFLPPSLKSTRGYFNSHSEFGVSISKFSRRRFHNPTR. The Rieske domain occupies 96–203; sequence WQAVGYSDQI…VAVWGPFVLL (108 aa). [2Fe-2S] cluster is bound by residues C138, H140, C157, and H160. Residues H269 and H274 each contribute to the Fe cation site.

The protein belongs to the choline monooxygenase family. The cofactor is [2Fe-2S] cluster. Fe cation serves as cofactor. Requires Mg(2+) as cofactor.

Its subcellular location is the plastid. It localises to the chloroplast stroma. The catalysed reaction is choline + 2 reduced [2Fe-2S]-[ferredoxin] + O2 + 2 H(+) = betaine aldehyde hydrate + 2 oxidized [2Fe-2S]-[ferredoxin] + H2O. It functions in the pathway amine and polyamine biosynthesis; betaine biosynthesis via choline pathway; betaine aldehyde from choline (monooxygenase route): step 1/1. In terms of biological role, catalyzes the first step of the osmoprotectant glycine betaine synthesis. This chain is Choline monooxygenase, chloroplastic, found in Arabidopsis thaliana (Mouse-ear cress).